The chain runs to 347 residues: Probable zinc transporter 8 (347 aa).

Positions 1-27 are cleaved as a signal peptide; that stretch reads MATTTQHMNQIFLVLLLISFAISPAIS. Residues 28-51 are Extracellular-facing; that stretch reads TVPKECETDSTDSCIDKTKALPLK. The helical transmembrane segment at 52-72 threads the bilayer; it reads IVAIVAILVTSMIGVAAPLFS. Over 73–83 the chain is Cytoplasmic; it reads RYVTFLHPDGK. Residues 84 to 104 form a helical membrane-spanning segment; that stretch reads IFMIIKCFASGIILGTGFMHV. Topologically, residues 105–124 are extracellular; it reads LPDSFEMLSSPCLEDNPWHK. Residues 125 to 145 traverse the membrane as a helical segment; sequence FPFTGFVAMLSGLVTLAIDSI. Residues 146–192 lie on the Cytoplasmic side of the membrane; that stretch reads ATSLYTKKAVADDSEERTTPMIIQIDHLPLTTKERSSTCSKQLLRYR. Residues 193-213 traverse the membrane as a helical segment; sequence VIATVLELGIIVHSVVIGLSL. Residues 214 to 224 are Extracellular-facing; the sequence is GATNDTCTIKG. Residues 225–245 traverse the membrane as a helical segment; that stretch reads LIAALCFHQMFEGMGLGGCIL. Residues 246 to 254 lie on the Cytoplasmic side of the membrane; sequence QAEYTNVKK. The chain crosses the membrane as a helical span at residues 255 to 275; the sequence is FVMAFFFAVTTPSGIALGIAL. Over 276-286 the chain is Extracellular; the sequence is SSVYKDNSPTA. The chain crosses the membrane as a helical span at residues 287 to 307; the sequence is LITVGLLNACSAGLLIYMALV. The Cytoplasmic portion of the chain corresponds to 308–326; it reads DLLAAEFMGSMLQRSVKLQ. A helical membrane pass occupies residues 327-347; it reads LNCFGAALLGCGGMSVLAKWA.

Belongs to the ZIP transporter (TC 2.A.5) family.

The protein localises to the cell membrane. Probably mediates zinc uptake from the rhizosphere. The chain is Probable zinc transporter 8 (ZIP8) from Arabidopsis thaliana (Mouse-ear cress).